The primary structure comprises 329 residues: Biotin synthase (329 aa).

Residues 36 to 260 (GEIQLCTLLS…VAVARITMPK (225 aa)) form the Radical SAM core domain. Positions 51, 55, and 58 each coordinate [4Fe-4S] cluster. Cys-95, Cys-126, Cys-186, and Arg-264 together coordinate [2Fe-2S] cluster.

It belongs to the radical SAM superfamily. Biotin synthase family. As to quaternary structure, homodimer. It depends on [4Fe-4S] cluster as a cofactor. The cofactor is [2Fe-2S] cluster.

The catalysed reaction is (4R,5S)-dethiobiotin + (sulfur carrier)-SH + 2 reduced [2Fe-2S]-[ferredoxin] + 2 S-adenosyl-L-methionine = (sulfur carrier)-H + biotin + 2 5'-deoxyadenosine + 2 L-methionine + 2 oxidized [2Fe-2S]-[ferredoxin]. It functions in the pathway cofactor biosynthesis; biotin biosynthesis; biotin from 7,8-diaminononanoate: step 2/2. Catalyzes the conversion of dethiobiotin (DTB) to biotin by the insertion of a sulfur atom into dethiobiotin via a radical-based mechanism. The chain is Biotin synthase from Sphingopyxis alaskensis (strain DSM 13593 / LMG 18877 / RB2256) (Sphingomonas alaskensis).